The chain runs to 166 residues: Probable dual specificity protein phosphatase H1 homolog (166 aa).

The 142-residue stretch at 25–166 folds into the Tyrosine-protein phosphatase domain; that stretch reads DITKITDYVY…FLNQIIDKYI (142 aa). Cysteine 108 serves as the catalytic Phosphocysteine intermediate.

It belongs to the protein-tyrosine phosphatase family. Non-receptor class dual specificity subfamily. Homodimer.

The protein resides in the virion. Its subcellular location is the host cytoplasm. The catalysed reaction is O-phospho-L-tyrosyl-[protein] + H2O = L-tyrosyl-[protein] + phosphate. It carries out the reaction O-phospho-L-seryl-[protein] + H2O = L-seryl-[protein] + phosphate. In terms of biological role, serine/Tyrosine phosphatase which down-regulates cellular antiviral response by dephosphorylating activated STAT1 and blocking interferon (IFN)-stimulated innate immune responses. The chain is Probable dual specificity protein phosphatase H1 homolog from Vertebrata (FPV).